The sequence spans 852 residues: Nucleolar protein 14 homolog (852 aa).

The segment at 1-40 is disordered; it reads MVAKGKKASADAVYAKKTTRSANPFDNSTAQSSKRGNPFD. A compositionally biased stretch (polar residues) spans 20 to 35; it reads RSANPFDNSTAQSSKR. Residues 190 to 221 are a coiled coil; that stretch reads IDEMIVEQKRRKNEIAKEKDEVYDLTEKLDAN. Disordered stretches follow at residues 288 to 324 and 338 to 410; these read RRMRADGEEDEEASVAKPKHRSADDLDDGYFLAGEDD and LGTH…KSAD. A compositionally biased stretch (basic and acidic residues) spans 344–353; the sequence is GKKEAVLKGD. A compositionally biased stretch (acidic residues) spans 354–381; that stretch reads ENEDDDDKEGEEEEEEDSDEESDSEVDN. A coiled-coil region spans residues 774-851; that stretch reads KMSKAKEERA…ELSRAKKKKK (78 aa).

Belongs to the NOP14 family. As to quaternary structure, component of the ribosomal small subunit (SSU) processome.

Its subcellular location is the nucleus. It localises to the nucleolus. In terms of biological role, involved in nucleolar processing of pre-18S ribosomal RNA. Has a role in the nuclear export of 40S pre-ribosomal subunit to the cytoplasm. This is Nucleolar protein 14 homolog (l(3)07882) from Drosophila melanogaster (Fruit fly).